The following is a 208-amino-acid chain: Small ribosomal subunit protein uS2 (208 aa).

Positions 189 to 208 (KPDQDLPVPPEEFETRLVQT) are disordered.

The protein belongs to the universal ribosomal protein uS2 family.

In Pyrobaculum arsenaticum (strain DSM 13514 / JCM 11321 / PZ6), this protein is Small ribosomal subunit protein uS2.